Here is a 383-residue protein sequence, read N- to C-terminus: N-acetyldiaminopimelate deacetylase (383 aa).

Residue aspartate 72 is part of the active site. Glutamate 131 acts as the Proton acceptor in catalysis.

It belongs to the peptidase M20A family. N-acetyldiaminopimelate deacetylase subfamily.

The enzyme catalyses N-acetyl-(2S,6S)-2,6-diaminopimelate + H2O = (2S,6S)-2,6-diaminopimelate + acetate. It functions in the pathway amino-acid biosynthesis; L-lysine biosynthesis via DAP pathway; LL-2,6-diaminopimelate from (S)-tetrahydrodipicolinate (acetylase route): step 3/3. Catalyzes the conversion of N-acetyl-diaminopimelate to diaminopimelate and acetate. This chain is N-acetyldiaminopimelate deacetylase, found in Lacticaseibacillus casei (strain BL23) (Lactobacillus casei).